The chain runs to 248 residues: Ubiquinone biosynthesis O-methyltransferase (248 aa).

S-adenosyl-L-methionine is bound by residues Arg41, Gly72, Asp93, and Met136.

Belongs to the methyltransferase superfamily. UbiG/COQ3 family.

It catalyses the reaction a 3-demethylubiquinol + S-adenosyl-L-methionine = a ubiquinol + S-adenosyl-L-homocysteine + H(+). The enzyme catalyses a 3-(all-trans-polyprenyl)benzene-1,2-diol + S-adenosyl-L-methionine = a 2-methoxy-6-(all-trans-polyprenyl)phenol + S-adenosyl-L-homocysteine + H(+). The protein operates within cofactor biosynthesis; ubiquinone biosynthesis. Functionally, O-methyltransferase that catalyzes the 2 O-methylation steps in the ubiquinone biosynthetic pathway. The protein is Ubiquinone biosynthesis O-methyltransferase of Sinorhizobium medicae (strain WSM419) (Ensifer medicae).